The primary structure comprises 269 residues: uncharacterized protein (269 aa).

The tract at residues 1–21 is disordered; sequence MAYSSSNSDIEDDSSKSNSNL.

This is an uncharacterized protein from Homo sapiens (Human).